The primary structure comprises 195 residues: Imidazoleglycerol-phosphate dehydratase (195 aa).

Belongs to the imidazoleglycerol-phosphate dehydratase family.

The protein localises to the cytoplasm. The catalysed reaction is D-erythro-1-(imidazol-4-yl)glycerol 3-phosphate = 3-(imidazol-4-yl)-2-oxopropyl phosphate + H2O. It participates in amino-acid biosynthesis; L-histidine biosynthesis; L-histidine from 5-phospho-alpha-D-ribose 1-diphosphate: step 6/9. The sequence is that of Imidazoleglycerol-phosphate dehydratase from Jannaschia sp. (strain CCS1).